The following is a 343-amino-acid chain: MDQVGRKVVVALDTMGGDRAPDEILLGASVYLRQNPSSVFFRLFGNSSSIERCLSSKANVHLLESCEIIHAGDVVMSDDKLSSAVRKKGSSMYKAVQDVREKASQCVVSAGNTGAFMGISKILLGMLENIYRPAIVTTLPTKKGEVVVLDLGANLDCSSDVLYQFAFMGSAFAKAALGVKNPRVALLNVGVEENKGTDAVKEAFHLLNERTDEDFTFIGYAEPSDVLGGEVDVVVSDGFTGNVMLKTAESIFRLLRDDIVGATRTSLLSRLAGLVLAKSLKKSISRFNPDLRNGAMLIGVNGVAVKAHGGSDSVAFANAIGAAVKLVANNLNSKIIDSICTID.

It belongs to the PlsX family. As to quaternary structure, homodimer. Probably interacts with PlsY.

Its subcellular location is the cytoplasm. It carries out the reaction a fatty acyl-[ACP] + phosphate = an acyl phosphate + holo-[ACP]. Its pathway is lipid metabolism; phospholipid metabolism. Catalyzes the reversible formation of acyl-phosphate (acyl-PO(4)) from acyl-[acyl-carrier-protein] (acyl-ACP). This enzyme utilizes acyl-ACP as fatty acyl donor, but not acyl-CoA. This chain is Phosphate acyltransferase, found in Neorickettsia sennetsu (strain ATCC VR-367 / Miyayama) (Ehrlichia sennetsu).